An 833-amino-acid polypeptide reads, in one-letter code: G-type lectin S-receptor-like serine/threonine-protein kinase RKS1 (833 aa).

Residues 1–18 (MKVVFVIFFFFLFQFCIS) form the signal peptide. The 126-residue stretch at 19 to 144 (VDTIMRRQSL…VTGRSFWESF (126 aa)) folds into the Bulb-type lectin domain. Residues 19–440 (VDTIMRRQSL…NGLSGKRRVL (422 aa)) are Extracellular-facing. 6 N-linked (GlcNAc...) asparagine glycosylation sites follow: Asn79, Asn92, Asn100, Asn109, Asn228, and Asn256. The region spanning 280–330 (PKEQCDNYAHCGPNGYCDSPSSKTFECTCLPGFEPKFPRHWFLRDSSGGCT) is the EGF-like domain. 3 disulfide bridges follow: Cys284/Cys296, Cys290/Cys306, and Cys308/Cys329. In terms of domain architecture, PAN spans 338–421 (CSEKDGFVKL…SGQDFYIRVD (84 aa)). 2 N-linked (GlcNAc...) asparagine glycosylation sites follow: Asn363 and Asn376. 2 cysteine pairs are disulfide-bonded: Cys369-Cys396 and Cys373-Cys379. The chain crosses the membrane as a helical span at residues 441–461 (LILISLIAAVMLLTVILFCVV). At 462 to 833 (RERRKSNRHR…DVTFSDIQGR (372 aa)) the chain is on the cytoplasmic side. Positions 515–800 (FSSQNKLGAG…NLPNPKHPAF (286 aa)) constitute a Protein kinase domain. ATP is bound by residues 521–529 (LGAGGFGPV) and Lys543. A phosphoserine mark is found at Ser549 and Ser564. Residues 604 to 621 (EQRAELDWPKRMEIVRGI) form a caM-binding region. Asp640 (proton acceptor) is an active-site residue. Phosphoserine occurs at positions 644 and 657. Thr674 is modified (phosphothreonine). Phosphoserine is present on residues Ser717 and Ser821.

It belongs to the protein kinase superfamily. Ser/Thr protein kinase family.

It is found in the cell membrane. It carries out the reaction L-seryl-[protein] + ATP = O-phospho-L-seryl-[protein] + ADP + H(+). It catalyses the reaction L-threonyl-[protein] + ATP = O-phospho-L-threonyl-[protein] + ADP + H(+). The polypeptide is G-type lectin S-receptor-like serine/threonine-protein kinase RKS1 (RKS1) (Arabidopsis thaliana (Mouse-ear cress)).